Consider the following 513-residue polypeptide: Glycerol-3-phosphate dehydrogenase (513 aa).

16–44 (DVAVIGGGINGVGIAADAAGRGLSVFLCE) lines the FAD pocket.

It belongs to the FAD-dependent glycerol-3-phosphate dehydrogenase family. FAD serves as cofactor.

The protein localises to the cytoplasm. It carries out the reaction a quinone + sn-glycerol 3-phosphate = dihydroxyacetone phosphate + a quinol. In Pseudomonas tolaasii, this protein is Glycerol-3-phosphate dehydrogenase (glpD).